We begin with the raw amino-acid sequence, 93 residues long: Cobalt transport protein CbiN (93 aa).

A run of 2 helical transmembrane segments spans residues 5–25 and 62–82; these read LILL…DHGG and SLLF…ILGY.

It belongs to the CbiN family. In terms of assembly, forms an energy-coupling factor (ECF) transporter complex composed of an ATP-binding protein (A component, CbiO), a transmembrane protein (T component, CbiQ) and 2 possible substrate-capture proteins (S components, CbiM and CbiN) of unknown stoichimetry.

The protein resides in the cell inner membrane. The protein operates within cofactor biosynthesis; adenosylcobalamin biosynthesis. Its function is as follows. Part of the energy-coupling factor (ECF) transporter complex CbiMNOQ involved in cobalt import. The polypeptide is Cobalt transport protein CbiN (Citrobacter koseri (strain ATCC BAA-895 / CDC 4225-83 / SGSC4696)).